Reading from the N-terminus, the 413-residue chain is Arginine biosynthesis bifunctional protein ArgJ (413 aa).

Substrate-binding residues include T158, K184, T195, E285, N408, and S413. Residue T195 is the Nucleophile of the active site.

The protein belongs to the ArgJ family. Heterotetramer of two alpha and two beta chains.

The protein resides in the cytoplasm. It catalyses the reaction N(2)-acetyl-L-ornithine + L-glutamate = N-acetyl-L-glutamate + L-ornithine. The catalysed reaction is L-glutamate + acetyl-CoA = N-acetyl-L-glutamate + CoA + H(+). It functions in the pathway amino-acid biosynthesis; L-arginine biosynthesis; L-ornithine and N-acetyl-L-glutamate from L-glutamate and N(2)-acetyl-L-ornithine (cyclic): step 1/1. Its pathway is amino-acid biosynthesis; L-arginine biosynthesis; N(2)-acetyl-L-ornithine from L-glutamate: step 1/4. Its function is as follows. Catalyzes two activities which are involved in the cyclic version of arginine biosynthesis: the synthesis of N-acetylglutamate from glutamate and acetyl-CoA as the acetyl donor, and of ornithine by transacetylation between N(2)-acetylornithine and glutamate. This chain is Arginine biosynthesis bifunctional protein ArgJ, found in Mesorhizobium japonicum (strain LMG 29417 / CECT 9101 / MAFF 303099) (Mesorhizobium loti (strain MAFF 303099)).